Here is a 98-residue protein sequence, read N- to C-terminus: NADH-ubiquinone oxidoreductase chain 4L (98 aa).

Transmembrane regions (helical) follow at residues 1-21 (MSPI…GMLV), 26-46 (LMAS…MIAL), and 61-81 (IILL…LVSI).

The protein belongs to the complex I subunit 4L family. In terms of assembly, core subunit of respiratory chain NADH dehydrogenase (Complex I) which is composed of 45 different subunits.

The protein localises to the mitochondrion inner membrane. It carries out the reaction a ubiquinone + NADH + 5 H(+)(in) = a ubiquinol + NAD(+) + 4 H(+)(out). In terms of biological role, core subunit of the mitochondrial membrane respiratory chain NADH dehydrogenase (Complex I) which catalyzes electron transfer from NADH through the respiratory chain, using ubiquinone as an electron acceptor. Part of the enzyme membrane arm which is embedded in the lipid bilayer and involved in proton translocation. This Chlorocebus sabaeus (Green monkey) protein is NADH-ubiquinone oxidoreductase chain 4L (MT-ND4L).